We begin with the raw amino-acid sequence, 925 residues long: Calpain-B (925 aa).

Positions 259–558 (MFEDPDFPAT…FDRVEICNLS (300 aa)) constitute a Calpain catalytic domain. Catalysis depends on residues Cys-314, His-470, and Asn-498. Residues 559-728 (PDSLTEDQQH…TRNNMEENDD (170 aa)) form a domain III region. The interval 723 to 753 (MEENDDEVGFGETDDRIAPSLPPPTPKEEDD) is disordered. The segment at 729 to 748 (EVGFGETDDRIAPSLPPPTP) is linker. A domain IV region spans residues 749 to 925 (KEEDDPQRIA…DDWLERTIYS (177 aa)). 2 EF-hand domains span residues 796 to 831 (FSKDAVRSMVAMLDKDRSGRLGFEEFEALLTDIAKW) and 826 to 861 (TDIAKWRAVFKLYDTRRTGSIDGFHLRGALNSAGYH). 9 residues coordinate Ca(2+): Asp-809, Asp-811, Ser-813, Arg-815, Glu-820, Asp-839, Thr-843, Ser-845, and His-850.

This sequence belongs to the peptidase C2 family. In terms of processing, undergoes calcium-dependent autolytic cleavage between Asn-74 and Ala-75 and between Gln-224 and Asn-225 to produce two major products, calpain B catalytic subunit 1 and calpain B catalytic subunit 2. This autolysis is necessary for activation of the protein. Strongly expressed in follicular and border cells of the oocyte. Ubiquitously expressed in early embryos. Localized to the trachea and their orifices, and to the larynx of late embryos. Restricted to the salivary gland in third instar larvae.

The protein localises to the cytoplasm. It localises to the membrane. Activated by millimolar concentrations of calcium. Its function is as follows. Calcium-regulated non-lysosomal thiol-protease. This Drosophila melanogaster (Fruit fly) protein is Calpain-B.